The sequence spans 549 residues: Neutral amino acid transporter 9 (549 aa).

The tract at residues 1-27 (MDEDSKPLLGSVPTGDYYTDSLDPKQR) is disordered. The Cytoplasmic portion of the chain corresponds to 1–107 (MDEDSKPLLG…GGDSPIKNPS (107 aa)). The chain crosses the membrane as a helical span at residues 108-128 (IVTIFAIWNTMMGTSILSIPW). An important for arginine binding and amino acid transport region spans residues 117–122 (TMMGTS). Serine 122 contacts arginine. Residues 129 to 134 (GIKQAG) are Lumenal-facing. Residues 135-155 (FTLGIIIIVLMGLLTLYCCYR) traverse the membrane as a helical segment. At 156 to 186 (VLKSTKSIPYVDTSDWEFPDVCKYYFGGFGK) the chain is on the cytoplasmic side. The chain crosses the membrane as a helical span at residues 187–213 (WSSLVFSLVSLIGAMVVYWVLMSNFLF). The Lumenal segment spans residues 214–271 (NTGKFIFNYVHNVNTSDAFGTNGTERVICPYPDVDPHGNSSTSLYSGSDNSTGLEFDH). N-linked (GlcNAc...) asparagine glycans are attached at residues asparagine 227, asparagine 235, asparagine 252, and asparagine 263. A disulfide bridge links cysteine 242 with cysteine 412. A helical transmembrane segment spans residues 272–288 (WWSKTNTIPFYLILLLL). Residues 289 to 297 (PLLNFRSAS) are Cytoplasmic-facing. Residues 298-322 (FFARFTFLGTISVIYLIFLVTYKAI) form a helical membrane-spanning segment. The Lumenal portion of the chain corresponds to 323–344 (QLGFHLEFHWFDSSMFFVPEFR). A helical membrane pass occupies residues 345–365 (TLFPQLSGVLTLAFFIHNCII). Residues 366 to 382 (TLMKNNKHQENNVRDLS) are Cytoplasmic-facing. The chain crosses the membrane as a helical span at residues 383–403 (LAYLLVGLTYLYVGVLIFAAF). Over 404-425 (PSPPLSKECIEPNFLDNFPSSD) the chain is Lumenal. A helical transmembrane segment spans residues 426-446 (ILVFVARTFLLFQMTTVYPLL). The short motif at 432 to 442 (RTFLLFQMTTV) is the CARC motif element. Residues 445-451 (LLGYLVR) carry the CRAC motif motif. Over 447-467 (GYLVRVQLMGQIFGNHYPGFL) the chain is Cytoplasmic. A helical membrane pass occupies residues 468–488 (HVFVLNVFVVGAGVLMARFYP). Residues 489–495 (NIGSIIR) are Lumenal-facing. Residues 496–516 (YSGALCGLALVFVLPSLIHMV) traverse the membrane as a helical segment. Over 517–528 (SLKRRGELRWTS) the chain is Cytoplasmic. The helical transmembrane segment at 529 to 549 (TLFHGFLILLGVANLLGQFFM) threads the bilayer.

Belongs to the amino acid/polyamine transporter 2 family. SLC38A9 subfamily. As to quaternary structure, associated component of the Ragulator complex. Associated component of the Rag GTPases heterodimers (RRAGA and RRAGC). In terms of processing, glycosylated.

It localises to the lysosome membrane. Its subcellular location is the late endosome membrane. It catalyses the reaction L-leucine(in) = L-leucine(out). It carries out the reaction L-tyrosine(in) = L-tyrosine(out). The enzyme catalyses L-glutamine(out) = L-glutamine(in). The catalysed reaction is L-asparagine(out) = L-asparagine(in). Amino acid transport activity is increased by sodium. Transport of L-glutamine, leucine and tyrosine is increased by arginine binding. In terms of biological role, lysosomal amino acid transporter involved in the activation of mTORC1 in response to amino acid levels. Probably acts as an amino acid sensor of the Rag GTPases and Ragulator complexes, 2 complexes involved in amino acid sensing and activation of mTORC1, a signaling complex promoting cell growth in response to growth factors, energy levels, and amino acids. Following activation by amino acids, the Ragulator and Rag GTPases function as a scaffold recruiting mTORC1 to lysosomes where it is in turn activated. SLC38A9 mediates transport of amino acids with low capacity and specificity with a slight preference for polar amino acids. Acts as an arginine sensor. Following activation by arginine binding, mediates transport of L-glutamine, leucine and tyrosine with high efficiency, and is required for the efficient utilization of these amino acids after lysosomal protein degradation. However, the transport mechanism is not well defined and the role of sodium is not clear. Guanine exchange factor (GEF) that, upon arginine binding, stimulates GDP release from RRAGA and therefore activates the Rag GTPase heterodimer and the mTORC1 pathway in response to nutrient sufficiency. The chain is Neutral amino acid transporter 9 from Danio rerio (Zebrafish).